The chain runs to 76 residues: Omega-conotoxin-like TxO2 (76 aa).

Positions Met1–Ala22 are cleaved as a signal peptide. The propeptide occupies Ala23–Arg52. Intrachain disulfides connect Cys53/Cys67, Cys60/Cys71, and Cys66/Cys75.

The protein belongs to the conotoxin O1 superfamily. Expressed by the venom duct.

The protein resides in the secreted. Omega-conotoxins act at presynaptic membranes, they bind and block voltage-gated calcium channels (Cav). In Conus textile (Cloth-of-gold cone), this protein is Omega-conotoxin-like TxO2.